The chain runs to 520 residues: Hydroxymethylglutaryl-CoA synthase, cytoplasmic (520 aa).

Phosphoserine is present on Ser-4. (3S)-3-hydroxy-3-methylglutaryl-CoA is bound by residues Asp-43 and Ala-44. Position 44–46 (44–46) interacts with CoA; the sequence is AGK. Lys-46 bears the N6-acetyllysine mark. The active-site Proton donor/acceptor is Glu-95. (3S)-3-hydroxy-3-methylglutaryl-CoA contacts are provided by Cys-129, Asn-167, Thr-171, Ser-221, and His-264. Cys-129 functions as the Acyl-thioester intermediate in the catalytic mechanism. CoA is bound at residue Asn-167. Ser-221 contributes to the CoA binding site. Residue His-264 is the Proton donor/acceptor of the active site. CoA is bound by residues Lys-269 and Lys-273. Residues Lys-273, Asn-343, and Ser-377 each coordinate (3S)-3-hydroxy-3-methylglutaryl-CoA. Lys-273 is subject to N6-acetyllysine. Residue Thr-476 is modified to Phosphothreonine. The segment at 492–520 is disordered; the sequence is HIPSPAKKVPRLPATAAEPEAAVISNGEH. 2 positions are modified to phosphoserine: Ser-495 and Ser-516.

This sequence belongs to the thiolase-like superfamily. HMG-CoA synthase family. Homodimer.

The protein localises to the cytoplasm. It carries out the reaction acetoacetyl-CoA + acetyl-CoA + H2O = (3S)-3-hydroxy-3-methylglutaryl-CoA + CoA + H(+). It functions in the pathway metabolic intermediate biosynthesis; (R)-mevalonate biosynthesis; (R)-mevalonate from acetyl-CoA: step 2/3. Catalyzes the condensation of acetyl-CoA with acetoacetyl-CoA to form HMG-CoA, which is converted by HMG-CoA reductase (HMGCR) into mevalonate, a precursor for cholesterol synthesis. This chain is Hydroxymethylglutaryl-CoA synthase, cytoplasmic, found in Homo sapiens (Human).